Reading from the N-terminus, the 417-residue chain is Serine hydroxymethyltransferase (417 aa).

(6S)-5,6,7,8-tetrahydrofolate contacts are provided by residues Leu-121 and 125 to 127 (GHL). N6-(pyridoxal phosphate)lysine is present on Lys-229. Residue 355–357 (SPF) participates in (6S)-5,6,7,8-tetrahydrofolate binding.

It belongs to the SHMT family. Homodimer. The cofactor is pyridoxal 5'-phosphate.

The protein resides in the cytoplasm. It catalyses the reaction (6R)-5,10-methylene-5,6,7,8-tetrahydrofolate + glycine + H2O = (6S)-5,6,7,8-tetrahydrofolate + L-serine. Its pathway is one-carbon metabolism; tetrahydrofolate interconversion. The protein operates within amino-acid biosynthesis; glycine biosynthesis; glycine from L-serine: step 1/1. Its function is as follows. Catalyzes the reversible interconversion of serine and glycine with tetrahydrofolate (THF) serving as the one-carbon carrier. This reaction serves as the major source of one-carbon groups required for the biosynthesis of purines, thymidylate, methionine, and other important biomolecules. Also exhibits THF-independent aldolase activity toward beta-hydroxyamino acids, producing glycine and aldehydes, via a retro-aldol mechanism. The sequence is that of Serine hydroxymethyltransferase from Proteus mirabilis (strain HI4320).